The following is a 217-amino-acid chain: Dihydroflavonol 4-reductase (217 aa).

Residues Lys-27 and Tyr-146 each coordinate NADP(+).

The protein belongs to the NAD(P)-dependent epimerase/dehydratase family. Dihydroflavonol-4-reductase subfamily.

The enzyme catalyses a (2R,3S,4S)-leucoanthocyanidin + NADP(+) = a (2R,3R)-dihydroflavonol + NADPH + H(+). It catalyses the reaction (2S)-flavan-4-ol + NADP(+) = (2S)-flavanone + NADPH + H(+). Its pathway is pigment biosynthesis; anthocyanin biosynthesis. Functionally, bifunctional enzyme involved in flavonoid metabolism. The sequence is that of Dihydroflavonol 4-reductase (DFR1) from Medicago sativa (Alfalfa).